The primary structure comprises 298 residues: Diphthine methyl ester synthase (298 aa).

S-adenosyl-L-methionine contacts are provided by residues Leu9, Asp85, Gly88, Ser113–Val114, Leu164, Leu222, and His247.

This sequence belongs to the diphthine synthase family.

It localises to the cytoplasm. The catalysed reaction is 2-[(3S)-amino-3-carboxypropyl]-L-histidyl-[translation elongation factor 2] + 4 S-adenosyl-L-methionine = diphthine methyl ester-[translation elongation factor 2] + 4 S-adenosyl-L-homocysteine + 3 H(+). Its pathway is protein modification; peptidyl-diphthamide biosynthesis. In terms of biological role, S-adenosyl-L-methionine-dependent methyltransferase that catalyzes four methylations of the modified target histidine residue in translation elongation factor 2 (EF-2), to form an intermediate called diphthine methyl ester. The four successive methylation reactions represent the second step of diphthamide biosynthesis. The sequence is that of Diphthine methyl ester synthase (DPH5) from Kluyveromyces lactis (strain ATCC 8585 / CBS 2359 / DSM 70799 / NBRC 1267 / NRRL Y-1140 / WM37) (Yeast).